A 157-amino-acid chain; its full sequence is SsrA-binding protein (157 aa).

The tract at residues 132-157 is disordered; it reads KLHDKRETEKKRDWSREKGRLLRSRG. The span at 135–151 shows a compositional bias: basic and acidic residues; the sequence is DKRETEKKRDWSREKGR.

The protein belongs to the SmpB family.

The protein resides in the cytoplasm. In terms of biological role, required for rescue of stalled ribosomes mediated by trans-translation. Binds to transfer-messenger RNA (tmRNA), required for stable association of tmRNA with ribosomes. tmRNA and SmpB together mimic tRNA shape, replacing the anticodon stem-loop with SmpB. tmRNA is encoded by the ssrA gene; the 2 termini fold to resemble tRNA(Ala) and it encodes a 'tag peptide', a short internal open reading frame. During trans-translation Ala-aminoacylated tmRNA acts like a tRNA, entering the A-site of stalled ribosomes, displacing the stalled mRNA. The ribosome then switches to translate the ORF on the tmRNA; the nascent peptide is terminated with the 'tag peptide' encoded by the tmRNA and targeted for degradation. The ribosome is freed to recommence translation, which seems to be the essential function of trans-translation. The sequence is that of SsrA-binding protein from Rhodopseudomonas palustris (strain ATCC BAA-98 / CGA009).